We begin with the raw amino-acid sequence, 789 residues long: Cadherin-10 (789 aa).

A signal peptide spans Met1 to Thr22. A propeptide spanning residues Glu23 to Arg54 is cleaved from the precursor. 5 Cadherin domains span residues Gly55–Phe160, Pro161–Phe269, Pro270–Phe384, Ser385–Pro487, and Gln488–Pro606. Residues Gly55–Pro606 are Extracellular-facing. An N-linked (GlcNAc...) asparagine glycan is attached at Asn256. N-linked (GlcNAc...) asparagine glycosylation is found at Asn438, Asn456, and Asn534. The chain crosses the membrane as a helical span at residues Ala607–Leu634. At Lys635–Ser789 the chain is on the cytoplasmic side.

It localises to the cell membrane. Cadherins are calcium-dependent cell adhesion proteins. They preferentially interact with themselves in a homophilic manner in connecting cells; cadherins may thus contribute to the sorting of heterogeneous cell types. This is Cadherin-10 (CDH10) from Gallus gallus (Chicken).